Reading from the N-terminus, the 470-residue chain is Uronate isomerase (470 aa).

It belongs to the metallo-dependent hydrolases superfamily. Uronate isomerase family.

The catalysed reaction is D-glucuronate = D-fructuronate. It catalyses the reaction aldehydo-D-galacturonate = keto-D-tagaturonate. It participates in carbohydrate metabolism; pentose and glucuronate interconversion. The sequence is that of Uronate isomerase from Vibrio vulnificus (strain YJ016).